Reading from the N-terminus, the 210-residue chain is Protein GrpE (210 aa).

2 disordered regions span residues 1–40 (MTDD…PDPI) and 191–210 (KGGP…EKDA). The segment covering 11–23 (DATAADAAADATA) has biased composition (low complexity).

Belongs to the GrpE family. As to quaternary structure, homodimer.

It is found in the cytoplasm. Participates actively in the response to hyperosmotic and heat shock by preventing the aggregation of stress-denatured proteins, in association with DnaK and GrpE. It is the nucleotide exchange factor for DnaK and may function as a thermosensor. Unfolded proteins bind initially to DnaJ; upon interaction with the DnaJ-bound protein, DnaK hydrolyzes its bound ATP, resulting in the formation of a stable complex. GrpE releases ADP from DnaK; ATP binding to DnaK triggers the release of the substrate protein, thus completing the reaction cycle. Several rounds of ATP-dependent interactions between DnaJ, DnaK and GrpE are required for fully efficient folding. The chain is Protein GrpE from Rhizobium johnstonii (strain DSM 114642 / LMG 32736 / 3841) (Rhizobium leguminosarum bv. viciae).